A 523-amino-acid polypeptide reads, in one-letter code: Ribonuclease Y (523 aa).

Residues 28–48 (TYYIVATIIIAVIAVYVDYYI) traverse the membrane as a helical segment. Residues 227–312 (TVYVVNLPND…EMVEKAKKEV (86 aa)) enclose the KH domain. Positions 353–446 (VLKHSIEVSY…VQAADAISAA (94 aa)) constitute an HD domain.

It belongs to the RNase Y family.

Its subcellular location is the cell membrane. Its function is as follows. Endoribonuclease that initiates mRNA decay. This chain is Ribonuclease Y, found in Clostridium tetani (strain Massachusetts / E88).